The primary structure comprises 429 residues: Small ribosomal subunit protein mS47 (429 aa).

4 residues coordinate substrate: glutamate 141, glycine 166, glutamate 189, and aspartate 197.

It belongs to the enoyl-CoA hydratase/isomerase family. Mitochondrion-specific ribosomal protein mS47 subfamily. As to quaternary structure, component of the mitochondrial small ribosomal subunit (mt-SSU). Mature yeast 74S mitochondrial ribosomes consist of a small (37S) and a large (54S) subunit. The 37S small subunit contains a 15S ribosomal RNA (15S mt-rRNA) and at least 32 different proteins. The 54S large subunit contains a 21S rRNA (21S mt-rRNA) and at least 45 different proteins. mS47/snr1 forms a protuberance of the yeast mitoribosome and retains a solvent-exposed cavity likely capable of accommodating a substrate, in accordance with it being an active enzyme as well as an integral constituent of the mitoribosome.

The protein resides in the mitochondrion. It carries out the reaction 3-hydroxy-2-methylpropanoyl-CoA + H2O = 3-hydroxy-2-methylpropanoate + CoA + H(+). The protein operates within amino-acid degradation; L-valine degradation. Component of the mitochondrial ribosome (mitoribosome), a dedicated translation machinery responsible for the synthesis of mitochondrial genome-encoded proteins, including at least some of the essential transmembrane subunits of the mitochondrial respiratory chain. The mitoribosomes are attached to the mitochondrial inner membrane and translation products are cotranslationally integrated into the membrane. mS47/snr1 has enzymatic activity in vitro, and is able to catalyze the specific hydrolysis of 3-hydroxyisobutyryl-CoA (HIBYL-CoA). However, because the turnover rate of mS47/snr1 is only a fraction of that of the homologous mammalian enzyme, the physiological function of this activity remains unclear. Has an indirect role in endocytic membrane trafficking. This Schizosaccharomyces pombe (strain 972 / ATCC 24843) (Fission yeast) protein is Small ribosomal subunit protein mS47 (snr1).